The sequence spans 501 residues: Glycerol kinase (501 aa).

Threonine 17 provides a ligand contact to ADP. ATP contacts are provided by threonine 17, threonine 18, and serine 19. Threonine 17 serves as a coordination point for sn-glycerol 3-phosphate. Position 21 (arginine 21) interacts with ADP. The sn-glycerol 3-phosphate site is built by arginine 87, glutamate 88, tyrosine 139, and aspartate 243. Glycerol-binding residues include arginine 87, glutamate 88, tyrosine 139, aspartate 243, and glutamine 244. ADP contacts are provided by threonine 265 and glycine 308. Threonine 265, glycine 308, glutamine 312, and glycine 409 together coordinate ATP. ADP contacts are provided by glycine 409 and asparagine 413.

This sequence belongs to the FGGY kinase family.

The catalysed reaction is glycerol + ATP = sn-glycerol 3-phosphate + ADP + H(+). The protein operates within polyol metabolism; glycerol degradation via glycerol kinase pathway; sn-glycerol 3-phosphate from glycerol: step 1/1. Inhibited by fructose 1,6-bisphosphate (FBP). Functionally, key enzyme in the regulation of glycerol uptake and metabolism. Catalyzes the phosphorylation of glycerol to yield sn-glycerol 3-phosphate. This Pseudomonas syringae pv. syringae (strain B728a) protein is Glycerol kinase.